A 218-amino-acid polypeptide reads, in one-letter code: Sodium channel regulatory subunit beta-1 (218 aa).

The signal sequence occupies residues 1-18; sequence MGTLLAFVVGAALVSSAW. The Extracellular segment spans residues 19-157; it reads GGCVEVDSET…DKANRDMASI (139 aa). Cystine bridges form between Cys21–Cys43 and Cys40–Cys121. One can recognise an Ig-like C2-type domain in the interval 22–150; sequence VEVDSETEAV…KIHLEVVDKA (129 aa). N-linked (GlcNAc...) asparagine glycosylation is found at Asn93, Asn110, Asn114, and Asn135. A helical transmembrane segment spans residues 158–179; the sequence is VSEIMMYVLIVVLTIWLVAEMV. The Cytoplasmic segment spans residues 180–218; that stretch reads YCYKKIAAATEAAAQENASEYLAITSESKENCTGVQVAE.

The protein belongs to the sodium channel auxiliary subunit SCN1B (TC 8.A.17) family. As to quaternary structure, a voltage-gated sodium (Nav) channel consists of an ion-conducting pore-forming alpha subunit functional on its own that is regulated by one or more beta subunits. Interacts with SCN1A; regulatory subunit of SCN1A/Nav1.1. Interacts with SCN3A; regulatory subunit of SCN3A/Nav1.3. Interacts with SCN4A; regulatory subunit of SCN4A/Nav1.4. Interacts with SCN5A; regulatory subunit of SCN5A/Nav1.5. Interacts with SCN8A; regulatory subunit of SCN8A/Nav1.6. Interacts with SCN9A; regulatory subunit of SCN9A/Nav1.7. Interacts with SCN10A; regulatory subunit of SCN10A/Nav1.8. Interacts with NFASC. Interacts with TMEM65.

The protein localises to the cell membrane. Its subcellular location is the perikaryon. The protein resides in the cell projection. It localises to the axon. Functionally, regulatory subunit of multiple voltage-gated sodium (Nav) channels directly mediating the depolarization of excitable membranes. Navs, also called VGSCs (voltage-gated sodium channels) or VDSCs (voltage-dependent sodium channels), operate by switching between closed and open conformations depending on the voltage difference across the membrane. In the open conformation they allow Na(+) ions to selectively pass through the pore, along their electrochemical gradient. The influx of Na+ ions provokes membrane depolarization, initiating the propagation of electrical signals throughout cells and tissues. The accessory beta subunits participate in localization and functional modulation of the Nav channels. Modulates the activity of SCN1A/Nav1.1, SCN2A/Nav1.2, SCN3A/Nav1.3, SCN4A/Nav1.4, SCN5A/Nav1.5, SCN8A/Nav1.6, SCN9A/Nav1.7 and SCN10A/Nav1.8. In Bos taurus (Bovine), this protein is Sodium channel regulatory subunit beta-1.